A 322-amino-acid polypeptide reads, in one-letter code: MHPILKNIRSQPDQGRAEEHNPELHCGIAGTGGLEEQLRSKQREDRFHKACPPAVDLNRDDTQLYGEGERDLRLKSSACVQLDRTPVTPEDFVPDDMGSRAIRQMEAAKLVRNGQHTRDVERWQHDTYCSHLTQLLVRPLTSLGVMYLADFLNTFVELPPNHTLTMQLVTIINHTSEPTLRRLLKDIGEKDAEGHLKNEWLLQLLSIIEMIFKDEPSERARLTALLTVTNEVALNFSKKASGGNYPTTDRLSKTLTYFRRMIVALLALAESLGCYTNNYCARKPEKRCRTQVEPSDESYMFSLKGALEAPESDEEEEEWIRD.

The segment at M1–L24 is disordered. The segment at M1–T127 is interaction with packaging protein 1.

Belongs to the adenoviridae packaging protein 3 family. In terms of assembly, part of the genome packaging complex composed of packaging proteins 1, 2 and 3; this complex specifically binds to the packaging sequence on the left end of viral genomic DNA and performs packaging of the viral genome. Interacts with hexon-linking protein IIIa; this interaction is required to promote correct genome packaging. Post-translationally, cleaved at different sites by the viral protease during virion maturation.

It localises to the host nucleus. In terms of biological role, involved in viral genome packaging through its interaction with packaging proteins 1 and 2. After proteolytic cleavage by adenovirus protease, L1 52/55k protein is removed from the capsid during viral maturation. This Pantherophis guttatus (Corn snake) protein is Packaging protein 3.